A 100-amino-acid chain; its full sequence is Small ribosomal subunit protein uS14c (100 aa).

Belongs to the universal ribosomal protein uS14 family. Part of the 30S ribosomal subunit.

The protein resides in the plastid. It localises to the chloroplast. Functionally, binds 16S rRNA, required for the assembly of 30S particles. The protein is Small ribosomal subunit protein uS14c of Liriodendron tulipifera (Tuliptree).